Here is a 62-residue protein sequence, read N- to C-terminus: Large ribosomal subunit protein bL28 (62 aa).

The segment at 1–26 is disordered; it reads MARKCYVTGKSPKSGNNRSHALNKTK. A compositionally biased stretch (polar residues) spans 11-20; that stretch reads SPKSGNNRSH.

The protein belongs to the bacterial ribosomal protein bL28 family.

The protein is Large ribosomal subunit protein bL28 of Exiguobacterium sp. (strain ATCC BAA-1283 / AT1b).